Reading from the N-terminus, the 286-residue chain is Fructose-bisphosphate aldolase (286 aa).

Ser-50 contributes to the D-glyceraldehyde 3-phosphate binding site. The Proton donor role is filled by Asp-85. Residues His-86, Asp-107, Glu-137, and His-181 each coordinate Zn(2+). Residue Gly-182 participates in dihydroxyacetone phosphate binding. Residue His-209 participates in Zn(2+) binding. Residues 210–212 and 231–234 each bind dihydroxyacetone phosphate; these read GGT and NVNT.

It belongs to the class II fructose-bisphosphate aldolase family. Requires Zn(2+) as cofactor.

The enzyme catalyses beta-D-fructose 1,6-bisphosphate = D-glyceraldehyde 3-phosphate + dihydroxyacetone phosphate. Its pathway is carbohydrate degradation; glycolysis; D-glyceraldehyde 3-phosphate and glycerone phosphate from D-glucose: step 4/4. Its function is as follows. Catalyzes the aldol condensation of dihydroxyacetone phosphate (DHAP or glycerone-phosphate) with glyceraldehyde 3-phosphate (G3P) to form fructose 1,6-bisphosphate (FBP) in gluconeogenesis and the reverse reaction in glycolysis. The chain is Fructose-bisphosphate aldolase (fba) from Staphylococcus aureus (strain MSSA476).